Reading from the N-terminus, the 88-residue chain is UPF0335 protein WD_0557 (88 aa).

The protein belongs to the UPF0335 family.

The protein is UPF0335 protein WD_0557 of Wolbachia pipientis wMel.